A 254-amino-acid chain; its full sequence is MNSIHIKKKSNRSFRRRKVFGNEKEFDLEELDDNDIRLRQALEATKRRKIRNSIIGINAEKLLNQETKKEKQLNTANEPHEANDQTSAQSSKLIEAQLPTVEDRFAKQTNEVDINTHLLNFVEKKLKQERLAQNYSENGETNALNTKNESTVQNIKNSLHPNEHSFIRDAAALGAIREVDLGIISTDVDNLKNGRKRQKKRARMKEKLDSKALRTSEDAARDEFIEKMLKPISQDEESKGIYRRFRVYKDGTQD.

The segment covering 69–83 has biased composition (basic and acidic residues); it reads KEKQLNTANEPHEAN. Disordered regions lie at residues 69–90 and 195–216; these read KEKQ…SAQS and RKRQ…LRTS. Over residues 195 to 204 the composition is skewed to basic residues; the sequence is RKRQKKRARM. Basic and acidic residues predominate over residues 205–216; the sequence is KEKLDSKALRTS.

The protein belongs to the TLS1 family. In terms of assembly, component of the spliceosome. Interacts with brr2.

Its subcellular location is the cytoplasm. It localises to the nucleus. Its function is as follows. Plays a role in pre-mRNA splicing by facilitating excision of introns featuring long spacing between the branchpoint and 3'-splice site. Assists the splicing of several components involved in chromatin organization, such as several shelterin complex subunits. This chain is Splicing factor tls1, found in Schizosaccharomyces pombe (strain 972 / ATCC 24843) (Fission yeast).